Reading from the N-terminus, the 196-residue chain is dITP/XTP pyrophosphatase (196 aa).

7-12 (THNPGK) lines the substrate pocket. Mg(2+)-binding residues include D40 and D69. D69 acts as the Proton acceptor in catalysis. Substrate-binding positions include S70, 150–153 (FGYD), K173, and 178–179 (HR).

This sequence belongs to the HAM1 NTPase family. Homodimer. The cofactor is Mg(2+).

The catalysed reaction is XTP + H2O = XMP + diphosphate + H(+). The enzyme catalyses dITP + H2O = dIMP + diphosphate + H(+). It catalyses the reaction ITP + H2O = IMP + diphosphate + H(+). Pyrophosphatase that catalyzes the hydrolysis of nucleoside triphosphates to their monophosphate derivatives, with a high preference for the non-canonical purine nucleotides XTP (xanthosine triphosphate), dITP (deoxyinosine triphosphate) and ITP. Seems to function as a house-cleaning enzyme that removes non-canonical purine nucleotides from the nucleotide pool, thus preventing their incorporation into DNA/RNA and avoiding chromosomal lesions. The polypeptide is dITP/XTP pyrophosphatase (Exiguobacterium sp. (strain ATCC BAA-1283 / AT1b)).